We begin with the raw amino-acid sequence, 484 residues long: Notoamide biosynthesis transcriptional activator notL (484 aa).

Residues 33–60 constitute a DNA-binding region (zn(2)-C6 fungal-type); sequence CQSCATSKIKCPKEKTSCSKCQARGIEC. Disordered regions lie at residues 70 to 154 and 363 to 387; these read RRRE…NNSV and GGGE…QMRP. The segment covering 76–122 has biased composition (low complexity); it reads TGHPTSCTSTSTTANSSSSSSRSSNSSSSSSTSPPSSSSSLSSNPEP. Positions 123-133 are enriched in basic and acidic residues; that stretch reads TSDKDLPRPRS. 2 stretches are compositionally biased toward polar residues: residues 139 to 154 and 368 to 378; these read ANST…NNSV and DTGQRPATSMI.

The protein localises to the nucleus. In terms of biological role, transcription factor that probably regulates the expression of the gene cluster that mediates the biosynthesis of notoamide, a fungal indole alkaloid that belongs to a family of natural products containing a characteristic bicyclo[2.2.2]diazaoctane core. The chain is Notoamide biosynthesis transcriptional activator notL from Aspergillus sp. (strain MF297-2).